The chain runs to 1165 residues: Protein hsr-9 (1165 aa).

Disordered stretches follow at residues methionine 1–threonine 26, alanine 70–glutamate 578, lysine 608–lysine 713, and threonine 874–glutamate 913. Positions threonine 16–threonine 26 are enriched in low complexity. Composition is skewed to basic and acidic residues over residues lysine 98–serine 114, threonine 123–isoleucine 140, and aspartate 149–glycine 162. Acidic residues-rich tracts occupy residues aspartate 163–glutamate 179, glutamate 211–valine 230, and glycine 280–glutamine 289. Positions alanine 306–proline 317 are enriched in polar residues. Over residues asparagine 397–lysine 408 the composition is skewed to basic and acidic residues. Residues serine 415 to serine 431 show a composition bias toward low complexity. Residues leucine 446–asparagine 461 show a composition bias toward basic and acidic residues. Over residues aspartate 533 to glutamate 543 the composition is skewed to acidic residues. The segment covering alanine 554 to lysine 563 has biased composition (low complexity). Basic and acidic residues-rich tracts occupy residues lysine 662–aspartate 671 and serine 694–proline 708. In terms of domain architecture, BRCT spans isoleucine 923–leucine 1028.

As to expression, expressed in germ cells.

Its subcellular location is the nucleus. Functionally, may have a role in DNA double-strand break repair following gamma-irradiation. This chain is Protein hsr-9, found in Caenorhabditis elegans.